Consider the following 157-residue polypeptide: Protein Smg homolog (157 aa).

The protein belongs to the Smg family.

The protein is Protein Smg homolog of Xanthomonas campestris pv. campestris (strain 8004).